A 251-amino-acid polypeptide reads, in one-letter code: 5-oxoprolinase subunit A (251 aa).

It belongs to the LamB/PxpA family. Forms a complex composed of PxpA, PxpB and PxpC.

It catalyses the reaction 5-oxo-L-proline + ATP + 2 H2O = L-glutamate + ADP + phosphate + H(+). Catalyzes the cleavage of 5-oxoproline to form L-glutamate coupled to the hydrolysis of ATP to ADP and inorganic phosphate. In Vibrio parahaemolyticus serotype O3:K6 (strain RIMD 2210633), this protein is 5-oxoprolinase subunit A.